The following is a 157-amino-acid chain: Small ribosomal subunit protein uS7 (157 aa).

This sequence belongs to the universal ribosomal protein uS7 family. In terms of assembly, part of the 30S ribosomal subunit. Contacts proteins S9 and S11.

One of the primary rRNA binding proteins, it binds directly to 16S rRNA where it nucleates assembly of the head domain of the 30S subunit. Is located at the subunit interface close to the decoding center, probably blocks exit of the E-site tRNA. This Salinibacter ruber (strain DSM 13855 / M31) protein is Small ribosomal subunit protein uS7.